The sequence spans 339 residues: DNA-directed RNA polymerase subunit alpha (339 aa).

An alpha N-terminal domain (alpha-NTD) region spans residues 1 to 233 (MVREEITGST…DLFLPFLHTE (233 aa)). Residues 264–339 (KKGIPLNCIF…IDLPKNKFSL (76 aa)) are alpha C-terminal domain (alpha-CTD).

It belongs to the RNA polymerase alpha chain family. In terms of assembly, in plastids the minimal PEP RNA polymerase catalytic core is composed of four subunits: alpha, beta, beta', and beta''. When a (nuclear-encoded) sigma factor is associated with the core the holoenzyme is formed, which can initiate transcription.

It is found in the plastid. It localises to the chloroplast. The enzyme catalyses RNA(n) + a ribonucleoside 5'-triphosphate = RNA(n+1) + diphosphate. Functionally, DNA-dependent RNA polymerase catalyzes the transcription of DNA into RNA using the four ribonucleoside triphosphates as substrates. The chain is DNA-directed RNA polymerase subunit alpha from Zea mays (Maize).